Here is a 306-residue protein sequence, read N- to C-terminus: MKVIKVGTRKSKLAMTQTQQLVDQLKALHPERDFVLVPYTTKGDRLTHVSLQEIGGKGVFVKEIERALLAGEINMAVHSLKDMPAKLAEGCALGAISQREDVRDCLIFRQAGQTLADLPKGSLIGTSSIRRQVQLQAQRPDLAFKPLRGNIDTRIKKLEEGEYDAIVLAMAGLKRLGWLDQSRLHIQPLETSLCLPAISQGALAVECREEDEELLSLLAAVQDEKTAAEVAVERAVLAQMNADCTFPIAAFAQKNGQGYQLEAMLAKEDGQCIFVSLQGQDGQQLAEQAVRQLADKGAVGMPWLKK.

S-(dipyrrolylmethanemethyl)cysteine is present on C244.

It belongs to the HMBS family. Monomer. The cofactor is dipyrromethane.

It carries out the reaction 4 porphobilinogen + H2O = hydroxymethylbilane + 4 NH4(+). The protein operates within porphyrin-containing compound metabolism; protoporphyrin-IX biosynthesis; coproporphyrinogen-III from 5-aminolevulinate: step 2/4. In terms of biological role, tetrapolymerization of the monopyrrole PBG into the hydroxymethylbilane pre-uroporphyrinogen in several discrete steps. The polypeptide is Porphobilinogen deaminase (Streptococcus sanguinis (strain SK36)).